Here is a 360-residue protein sequence, read N- to C-terminus: Heme A synthase (360 aa).

9 helical membrane-spanning segments follow: residues 29–49, 111–131, 139–159, 175–195, 210–230, 242–262, 269–289, 309–329, and 330–350; these read WLFAMAALVIAMVAVGGATRL, FLGRLIGFAFFLPLGWFWWTG, LGLLGLGVLGGLQGAVGWIMV, LAAHLTLASAIFAGLVWLAAG, LTALALPLLMLVQIALGGLVA, PLMDGAFIPPLSGLFAVTPWI, VALVQLNHRLAAYGLLAVAAL, AILGLVTAQAALGITTLLLAV, and PLWAGLAHQVTAMLVLGMAAV. His-276 serves as a coordination point for heme. His-337 contacts heme.

Belongs to the COX15/CtaA family. Type 2 subfamily. In terms of assembly, interacts with CtaB. Requires heme b as cofactor.

Its subcellular location is the cell membrane. It carries out the reaction Fe(II)-heme o + 2 A + H2O = Fe(II)-heme a + 2 AH2. Its pathway is porphyrin-containing compound metabolism; heme A biosynthesis; heme A from heme O: step 1/1. Its function is as follows. Catalyzes the conversion of heme O to heme A by two successive hydroxylations of the methyl group at C8. The first hydroxylation forms heme I, the second hydroxylation results in an unstable dihydroxymethyl group, which spontaneously dehydrates, resulting in the formyl group of heme A. This chain is Heme A synthase, found in Methylobacterium nodulans (strain LMG 21967 / CNCM I-2342 / ORS 2060).